A 198-amino-acid chain; its full sequence is Myb-related protein 340 (198 aa).

HTH myb-type domains are found at residues 10–62 and 63–117; these read DVEV…LNYL and RPDV…IQKH. 2 consecutive DNA-binding regions (H-T-H motif) follow at residues 38–62 and 90–113; these read WNTI…LNYL and WSKI…NRTR.

As to expression, expressed only in flowers.

Its subcellular location is the nucleus. Its function is as follows. Transcription factor. This Antirrhinum majus (Garden snapdragon) protein is Myb-related protein 340.